Reading from the N-terminus, the 445-residue chain is Argininosuccinate synthase (445 aa).

ATP contacts are provided by residues Ala18–Ser26 and Ala44. Tyr100 serves as a coordination point for L-citrulline. Positions 130 and 132 each coordinate ATP. Residues Thr132, Asn136, and Asp137 each contribute to the L-aspartate site. Asn136 contributes to the L-citrulline binding site. Asp137 lines the ATP pocket. L-citrulline is bound by residues Arg140 and Ser193. Asp195 contacts ATP. Residues Thr202, Glu204, and Glu281 each coordinate L-citrulline.

The protein belongs to the argininosuccinate synthase family. Type 2 subfamily. Homotetramer.

The protein localises to the cytoplasm. It carries out the reaction L-citrulline + L-aspartate + ATP = 2-(N(omega)-L-arginino)succinate + AMP + diphosphate + H(+). It functions in the pathway amino-acid biosynthesis; L-arginine biosynthesis; L-arginine from L-ornithine and carbamoyl phosphate: step 2/3. The protein is Argininosuccinate synthase (argG) of Pasteurella multocida (strain Pm70).